The primary structure comprises 246 residues: Phosphonates import ATP-binding protein PhnC (246 aa).

An ABC transporter domain is found at 2–246; that stretch reads IKFENVSKVY…ILDEVYRKEG (245 aa). 35–42 is a binding site for ATP; sequence GTSGAGKS.

This sequence belongs to the ABC transporter superfamily. Phosphonates importer (TC 3.A.1.9.1) family. The complex is composed of two ATP-binding proteins (PhnC), two transmembrane proteins (PhnE) and a solute-binding protein (PhnD).

The protein resides in the cell membrane. It catalyses the reaction phosphonate(out) + ATP + H2O = phosphonate(in) + ADP + phosphate + H(+). In terms of biological role, part of the ABC transporter complex PhnCDE involved in phosphonates import. Responsible for energy coupling to the transport system. The polypeptide is Phosphonates import ATP-binding protein PhnC (Lactococcus lactis subsp. cremoris (strain SK11)).